Reading from the N-terminus, the 482-residue chain is MGGYLAIVFIPQTNTKSMREKKQKCLKQVRRLSLISPKKYIMPDSIFEQPFVYCGVCHRRTSHGDPLRLTSCAHILCSQHSPLTSKVCPICRSSDISIINLVESKQLPTDIRIFFEPLPPLLESLYNVSQFQLNGLSKQCQYYQNHCLKLREKCARQQQLLYQAKIELDSMAILKKRIQELESVLNHNNVSSMSVGVLPTRNSHQNHYQPPPTVDLTVDDNSLEEFEAKSFIKKLKKNSSLRNSSKNNNGTVTPSTSGRVNKNQPLFMETLNNPNRNSIPPPGMNPNANSNLPNISTIAESTNLNRFSFSPVRVAKGFDGKLPNLDILTNNGSVSSKNISRLSSASLQPSSPLSSSSNRLILPNSNLKELHHSNTPLTSTSTQFPSALEKLKITRKRNNTISGSNRITHNLSSHVRSSGLAFSSSSNSLQQSKLPKSNILKRSNSTQQLTNTHLKSDNHLPPRSSNTVLGSSKKNNKFRRIR.

Disordered stretches follow at residues 239–263 (SSLRNSSKNNNGTVTPSTSGRVNKN) and 418–482 (SGLA…RRIR). Over residues 240–249 (SLRNSSKNNN) the composition is skewed to low complexity. The span at 250–263 (GTVTPSTSGRVNKN) shows a compositional bias: polar residues. Over residues 418–437 (SGLAFSSSSNSLQQSKLPKS) the composition is skewed to low complexity. Polar residues-rich tracts occupy residues 440–453 (LKRSNSTQQLTNTH) and 463–473 (RSSNTVLGSSK).

In terms of assembly, component of the synapsis initiation complex composed of at least ZIP2, ZIP3, MSH4 and MSH5. Also interacts with ZIP1, MRE11, RAD51 and RAD53.

It localises to the nucleus. Its subcellular location is the chromosome. Its function is as follows. Component of the synapsis initiation complex (SIC) necessary for the synaptonemal complex assembly. Stabilizes the ZIP2 component to the chromosomes. The SIC complex loads onto chromosomes and nucleates ZIP1 polymerization, a molecular zipper that acts to bring homologous chromosomes in close apposition, which is required for meiotic crossover. May also be involved in double strand break repair. The sequence is that of Chromosome stability protein 9 (CST9) from Saccharomyces cerevisiae (strain ATCC 204508 / S288c) (Baker's yeast).